The following is a 270-amino-acid chain: Acyl-[acyl-carrier-protein]--UDP-N-acetylglucosamine O-acyltransferase (270 aa).

Belongs to the transferase hexapeptide repeat family. LpxA subfamily. In terms of assembly, homotrimer.

The protein resides in the cytoplasm. The catalysed reaction is a (3R)-hydroxyacyl-[ACP] + UDP-N-acetyl-alpha-D-glucosamine = a UDP-3-O-[(3R)-3-hydroxyacyl]-N-acetyl-alpha-D-glucosamine + holo-[ACP]. The protein operates within glycolipid biosynthesis; lipid IV(A) biosynthesis; lipid IV(A) from (3R)-3-hydroxytetradecanoyl-[acyl-carrier-protein] and UDP-N-acetyl-alpha-D-glucosamine: step 1/6. Involved in the biosynthesis of lipid A, a phosphorylated glycolipid that anchors the lipopolysaccharide to the outer membrane of the cell. The protein is Acyl-[acyl-carrier-protein]--UDP-N-acetylglucosamine O-acyltransferase of Sinorhizobium medicae (strain WSM419) (Ensifer medicae).